Here is a 142-residue protein sequence, read N- to C-terminus: Nucleoside diphosphate kinase (142 aa).

Residues Lys-11, Phe-59, Arg-87, Thr-93, Arg-104, and Asn-114 each coordinate ATP. Catalysis depends on His-117, which acts as the Pros-phosphohistidine intermediate.

This sequence belongs to the NDK family. In terms of assembly, homotetramer. Mg(2+) is required as a cofactor.

It localises to the cytoplasm. It catalyses the reaction a 2'-deoxyribonucleoside 5'-diphosphate + ATP = a 2'-deoxyribonucleoside 5'-triphosphate + ADP. The catalysed reaction is a ribonucleoside 5'-diphosphate + ATP = a ribonucleoside 5'-triphosphate + ADP. Major role in the synthesis of nucleoside triphosphates other than ATP. The ATP gamma phosphate is transferred to the NDP beta phosphate via a ping-pong mechanism, using a phosphorylated active-site intermediate. In Pectobacterium carotovorum subsp. carotovorum (strain PC1), this protein is Nucleoside diphosphate kinase.